We begin with the raw amino-acid sequence, 94 residues long: Small ribosomal subunit protein uS19 (94 aa).

This sequence belongs to the universal ribosomal protein uS19 family.

In terms of biological role, protein S19 forms a complex with S13 that binds strongly to the 16S ribosomal RNA. The chain is Small ribosomal subunit protein uS19 from Wolbachia sp. subsp. Brugia malayi (strain TRS).